Reading from the N-terminus, the 277-residue chain is Thiazole synthase (277 aa).

Lysine 116 acts as the Schiff-base intermediate with DXP in catalysis. Residues glycine 177, 203 to 204, and 225 to 226 each bind 1-deoxy-D-xylulose 5-phosphate; these read AG and NT.

The protein belongs to the ThiG family. In terms of assembly, homotetramer. Forms heterodimers with either ThiH or ThiS.

It is found in the cytoplasm. It carries out the reaction [ThiS sulfur-carrier protein]-C-terminal-Gly-aminoethanethioate + 2-iminoacetate + 1-deoxy-D-xylulose 5-phosphate = [ThiS sulfur-carrier protein]-C-terminal Gly-Gly + 2-[(2R,5Z)-2-carboxy-4-methylthiazol-5(2H)-ylidene]ethyl phosphate + 2 H2O + H(+). The protein operates within cofactor biosynthesis; thiamine diphosphate biosynthesis. In terms of biological role, catalyzes the rearrangement of 1-deoxy-D-xylulose 5-phosphate (DXP) to produce the thiazole phosphate moiety of thiamine. Sulfur is provided by the thiocarboxylate moiety of the carrier protein ThiS. In vitro, sulfur can be provided by H(2)S. This chain is Thiazole synthase, found in Thermosynechococcus vestitus (strain NIES-2133 / IAM M-273 / BP-1).